Consider the following 454-residue polypeptide: Glutamyl-tRNA reductase (454 aa).

Residues 49–52 (TCNR), Ser109, 114–116 (ETQ), and Gln120 each bind substrate. The active-site Nucleophile is Cys50. An NADP(+)-binding site is contributed by 189-194 (GAGKMG).

This sequence belongs to the glutamyl-tRNA reductase family. Homodimer.

It carries out the reaction (S)-4-amino-5-oxopentanoate + tRNA(Glu) + NADP(+) = L-glutamyl-tRNA(Glu) + NADPH + H(+). The protein operates within porphyrin-containing compound metabolism; protoporphyrin-IX biosynthesis; 5-aminolevulinate from L-glutamyl-tRNA(Glu): step 1/2. In terms of biological role, catalyzes the NADPH-dependent reduction of glutamyl-tRNA(Glu) to glutamate 1-semialdehyde (GSA). The sequence is that of Glutamyl-tRNA reductase from Geobacillus kaustophilus (strain HTA426).